Here is a 348-residue protein sequence, read N- to C-terminus: Phenylalanine--tRNA ligase alpha subunit (348 aa).

Glutamate 259 lines the Mg(2+) pocket.

Belongs to the class-II aminoacyl-tRNA synthetase family. Phe-tRNA synthetase alpha subunit type 1 subfamily. As to quaternary structure, tetramer of two alpha and two beta subunits. Mg(2+) serves as cofactor.

It is found in the cytoplasm. The enzyme catalyses tRNA(Phe) + L-phenylalanine + ATP = L-phenylalanyl-tRNA(Phe) + AMP + diphosphate + H(+). The sequence is that of Phenylalanine--tRNA ligase alpha subunit from Limosilactobacillus reuteri (strain DSM 20016) (Lactobacillus reuteri).